Consider the following 401-residue polypeptide: Exodeoxyribonuclease 7 large subunit (401 aa).

It belongs to the XseA family. As to quaternary structure, heterooligomer composed of large and small subunits.

It localises to the cytoplasm. It carries out the reaction Exonucleolytic cleavage in either 5'- to 3'- or 3'- to 5'-direction to yield nucleoside 5'-phosphates.. Its function is as follows. Bidirectionally degrades single-stranded DNA into large acid-insoluble oligonucleotides, which are then degraded further into small acid-soluble oligonucleotides. The polypeptide is Exodeoxyribonuclease 7 large subunit (Clostridium botulinum (strain Loch Maree / Type A3)).